The chain runs to 122 residues: Large ribosomal subunit protein bL12 (122 aa).

This sequence belongs to the bacterial ribosomal protein bL12 family. Homodimer. Part of the ribosomal stalk of the 50S ribosomal subunit. Forms a multimeric L10(L12)X complex, where L10 forms an elongated spine to which 2 to 4 L12 dimers bind in a sequential fashion. Binds GTP-bound translation factors.

Forms part of the ribosomal stalk which helps the ribosome interact with GTP-bound translation factors. Is thus essential for accurate translation. This Lacticaseibacillus casei (strain BL23) (Lactobacillus casei) protein is Large ribosomal subunit protein bL12.